Consider the following 415-residue polypeptide: Multifunctional CCA protein (415 aa).

ATP is bound by residues glycine 8 and arginine 11. CTP contacts are provided by glycine 8 and arginine 11. Positions 21 and 23 each coordinate Mg(2+). 3 residues coordinate ATP: arginine 91, arginine 137, and arginine 140. Arginine 91, arginine 137, and arginine 140 together coordinate CTP. Positions 228–329 (TGIHTLMTLA…VGLFDSIDAW (102 aa)) constitute an HD domain.

This sequence belongs to the tRNA nucleotidyltransferase/poly(A) polymerase family. Bacterial CCA-adding enzyme type 1 subfamily. In terms of assembly, monomer. Can also form homodimers and oligomers. Mg(2+) is required as a cofactor. Requires Ni(2+) as cofactor.

The catalysed reaction is a tRNA precursor + 2 CTP + ATP = a tRNA with a 3' CCA end + 3 diphosphate. The enzyme catalyses a tRNA with a 3' CCA end + 2 CTP + ATP = a tRNA with a 3' CCACCA end + 3 diphosphate. Catalyzes the addition and repair of the essential 3'-terminal CCA sequence in tRNAs without using a nucleic acid template. Adds these three nucleotides in the order of C, C, and A to the tRNA nucleotide-73, using CTP and ATP as substrates and producing inorganic pyrophosphate. tRNA 3'-terminal CCA addition is required both for tRNA processing and repair. Also involved in tRNA surveillance by mediating tandem CCA addition to generate a CCACCA at the 3' terminus of unstable tRNAs. While stable tRNAs receive only 3'-terminal CCA, unstable tRNAs are marked with CCACCA and rapidly degraded. The polypeptide is Multifunctional CCA protein (Cronobacter sakazakii (strain ATCC BAA-894) (Enterobacter sakazakii)).